Consider the following 105-residue polypeptide: uncharacterized protein (105 aa).

It is found in the cytoplasm. It localises to the nucleus. This is an uncharacterized protein from Schizosaccharomyces pombe (strain 972 / ATCC 24843) (Fission yeast).